A 382-amino-acid chain; its full sequence is Glucose-1-phosphate adenylyltransferase (382 aa).

Residues Y100, G165, 180 to 181 (EK), and S191 contribute to the alpha-D-glucose 1-phosphate site.

Belongs to the bacterial/plant glucose-1-phosphate adenylyltransferase family. In terms of assembly, homotetramer.

It carries out the reaction alpha-D-glucose 1-phosphate + ATP + H(+) = ADP-alpha-D-glucose + diphosphate. It participates in glycan biosynthesis; glycogen biosynthesis. Functionally, involved in the biosynthesis of ADP-glucose, a building block required for the elongation reactions to produce glycogen. Catalyzes the reaction between ATP and alpha-D-glucose 1-phosphate (G1P) to produce pyrophosphate and ADP-Glc. This is Glucose-1-phosphate adenylyltransferase from Clostridium novyi (strain NT).